Reading from the N-terminus, the 422-residue chain is UDP-N-acetyl-D-glucosamine 6-dehydrogenase (422 aa).

5 residues coordinate NAD(+): Val-14, Asp-32, Arg-37, Thr-83, and Thr-118. The active-site Nucleophile is the Cys-258. Residue Arg-329 participates in NAD(+) binding.

Belongs to the UDP-glucose/GDP-mannose dehydrogenase family.

It catalyses the reaction UDP-N-acetyl-alpha-D-glucosamine + 2 NAD(+) + H2O = UDP-2-acetamido-2-deoxy-alpha-D-glucuronate + 2 NADH + 3 H(+). Its pathway is bacterial outer membrane biogenesis; LPS O-antigen biosynthesis. With respect to regulation, requires either potassium or ammonium-containing salts for activity. In terms of biological role, dehydrogenase required for the biosynthesis of the B-band O antigen of serotype O6 lipopolysaccharide. Is also required for flagellin glycosylation. Catalyzes the conversion of UDP-N-acetylglucosamine (UDP-GlcNAc) to UDP-N-acetylglucosaminuronic acid (UDP-GlcNAcA). Can also catalyze the conversion of UDP-N-acetyl-galactosamine (UDP-GalNAc) to UDP-N-acetylgalactosaminuronic acid (UDP-GalNAcA), with low efficiency. Can use NAD(+) or NADP(+), with a preference for NAD(+). The protein is UDP-N-acetyl-D-glucosamine 6-dehydrogenase of Pseudomonas aeruginosa.